Reading from the N-terminus, the 1013-residue chain is Tolloid-like protein 1 (1013 aa).

The signal sequence occupies residues 1 to 30 (MGLGTLSPRMLVWLVASGIVFYGELWVCAG). Positions 31-147 (LDYDYTFDGN…GQNEKNRVPR (117 aa)) are excised as a propeptide. Residues 148-347 (AATSRTERIW…AQARKLYRCP (200 aa)) enclose the Peptidase M12A domain. Asn169 carries N-linked (GlcNAc...) asparagine glycosylation. 4 disulfides stabilise this stretch: Cys190–Cys346, Cys210–Cys232, Cys212–Cys213, and Cys349–Cys375. His240 serves as a coordination point for Zn(2+). Residue Glu241 is part of the active site. Positions 244 and 250 each coordinate Zn(2+). CUB domains lie at 349 to 461 (CGET…YEAI) and 462 to 574 (CGGE…FFKE). Residues Asn359 and Asn390 are each glycosylated (N-linked (GlcNAc...) asparagine). Intrachain disulfides connect Cys402/Cys424, Cys462/Cys488, Cys515/Cys537, Cys578/Cys590, Cys586/Cys599, Cys601/Cys614, Cys618/Cys644, Cys671/Cys693, Cys734/Cys745, Cys741/Cys754, Cys756/Cys769, Cys774/Cys800, Cys827/Cys849, Cys887/Cys917, and Cys944/Cys966. An EGF-like 1; calcium-binding domain is found at 574–615 (EEDECAKPDRGGCEQRCLNTLGSYQCACEPGYELGPDRRSCE). A CUB 3 domain is found at 618–730 (CGGLLTKLNG…KGFKAHFFSD (113 aa)). Asn626 is a glycosylation site (N-linked (GlcNAc...) asparagine). Positions 730–770 (DKDECSKDNGGCQHECVNTMGSYMCQCRNGFVLHDNKHDCK) constitute an EGF-like 2; calcium-binding domain. CUB domains lie at 774 to 886 (CEQK…HSTE) and 887 to 1003 (CGGR…YKSI).

The cofactor is Zn(2+).

The protein resides in the secreted. Protease which processes procollagen C-propeptides, such as chordin, pro-biglycan and pro-lysyl oxidase. Required for the embryonic development. Predominant protease, which in the development, influences dorsal-ventral patterning and skeletogenesis. This Homo sapiens (Human) protein is Tolloid-like protein 1 (TLL1).